Reading from the N-terminus, the 365-residue chain is Histidinol-phosphate aminotransferase (365 aa).

Lysine 220 is subject to N6-(pyridoxal phosphate)lysine.

This sequence belongs to the class-II pyridoxal-phosphate-dependent aminotransferase family. Histidinol-phosphate aminotransferase subfamily. Homodimer. Requires pyridoxal 5'-phosphate as cofactor.

The enzyme catalyses L-histidinol phosphate + 2-oxoglutarate = 3-(imidazol-4-yl)-2-oxopropyl phosphate + L-glutamate. Its pathway is amino-acid biosynthesis; L-histidine biosynthesis; L-histidine from 5-phospho-alpha-D-ribose 1-diphosphate: step 7/9. This chain is Histidinol-phosphate aminotransferase, found in Neisseria meningitidis serogroup B (strain ATCC BAA-335 / MC58).